The following is a 500-amino-acid chain: Lysine--tRNA ligase (500 aa).

Positions 402 and 409 each coordinate Mg(2+).

Belongs to the class-II aminoacyl-tRNA synthetase family. Homodimer. Mg(2+) serves as cofactor.

It localises to the cytoplasm. The catalysed reaction is tRNA(Lys) + L-lysine + ATP = L-lysyl-tRNA(Lys) + AMP + diphosphate. The sequence is that of Lysine--tRNA ligase from Buchnera aphidicola subsp. Baizongia pistaciae (strain Bp).